A 149-amino-acid polypeptide reads, in one-letter code: Urease accessory protein UreE (149 aa).

Belongs to the UreE family.

It localises to the cytoplasm. Its function is as follows. Involved in urease metallocenter assembly. Binds nickel. Probably functions as a nickel donor during metallocenter assembly. The sequence is that of Urease accessory protein UreE from Ruegeria pomeroyi (strain ATCC 700808 / DSM 15171 / DSS-3) (Silicibacter pomeroyi).